We begin with the raw amino-acid sequence, 282 residues long: PILR alpha-associated neural protein (282 aa).

An N-terminal signal peptide occupies residues Met-1–Gly-31. A disordered region spans residues Pro-28–Ser-99. Over Ser-32–Pro-178 the chain is Extracellular. Positions Pro-46–Arg-56 are enriched in low complexity. Thr-140 is a glycosylation site (O-linked (GalNAc...) threonine). The chain crosses the membrane as a helical span at residues Gln-179–Phe-199. The Cytoplasmic segment spans residues Lys-200–Leu-282. The interval Arg-209–Leu-282 is disordered. A compositionally biased stretch (polar residues) spans Ser-213–Thr-229.

O-glycosylation at Thr-140 is essential for recognition by PILRA. Mainly expressed in adult brain and cerebellum. Weaker expression in fetal brain and virtually no expression in spleen, heart, kidney, liver and dorsal ganglion relative to brain.

It is found in the membrane. In terms of biological role, acts as a ligand for PILRA in neural tissues, where it may be involved in immune regulation. This Homo sapiens (Human) protein is PILR alpha-associated neural protein (PIANP).